A 286-amino-acid polypeptide reads, in one-letter code: UDP-3-O-acyl-N-acetylglucosamine deacetylase (286 aa).

The Zn(2+) site is built by His81, His240, and Asp244. Catalysis depends on His266, which acts as the Proton donor.

It belongs to the LpxC family. It depends on Zn(2+) as a cofactor.

It carries out the reaction a UDP-3-O-[(3R)-3-hydroxyacyl]-N-acetyl-alpha-D-glucosamine + H2O = a UDP-3-O-[(3R)-3-hydroxyacyl]-alpha-D-glucosamine + acetate. It participates in glycolipid biosynthesis; lipid IV(A) biosynthesis; lipid IV(A) from (3R)-3-hydroxytetradecanoyl-[acyl-carrier-protein] and UDP-N-acetyl-alpha-D-glucosamine: step 2/6. Catalyzes the hydrolysis of UDP-3-O-myristoyl-N-acetylglucosamine to form UDP-3-O-myristoylglucosamine and acetate, the committed step in lipid A biosynthesis. In Francisella tularensis subsp. tularensis (strain FSC 198), this protein is UDP-3-O-acyl-N-acetylglucosamine deacetylase.